The sequence spans 250 residues: Probable transcriptional regulatory protein SYNPCC7002_A1640 (250 aa).

It belongs to the TACO1 family.

The protein resides in the cytoplasm. This Picosynechococcus sp. (strain ATCC 27264 / PCC 7002 / PR-6) (Agmenellum quadruplicatum) protein is Probable transcriptional regulatory protein SYNPCC7002_A1640.